The chain runs to 344 residues: Interferon gamma receptor 1-like (344 aa).

A signal peptide spans 1–22; it reads MSKHAVVQFGVVYALLFPGVFG. At 23-229 the chain is on the extracellular side; sequence FVPSPTNVSV…QPTPETDKTG (207 aa). The Fibronectin type-III domain occupies 24–102; sequence VPSPTNVSVV…TAHDGQEKSE (79 aa). N-linked (GlcNAc...) asparagine glycans are attached at residues Asn-29, Asn-44, Asn-132, and Asn-189. Residues 230–250 traverse the membrane as a helical segment; it reads IIAALIGGATVVLFIIMGFVW. Topologically, residues 251-344 are cytoplasmic; the sequence is LLWRKWSNIP…SSDYDRPKFL (94 aa). The segment at 300–344 is disordered; it reads TEEDQSVSARDDTGADPPVVSEEGMAGEDSQGLGCSSDYDRPKFL.

This sequence belongs to the type II cytokine receptor family. Highly expressed in brain. Also detected in spleen, heart, intestine, gill and kidney. In immune cell populations, detected at low levels in monocytes, peripheral blood leukocytes, splenocytes, neutrophils and mature macrophages.

The protein localises to the cell membrane. Its function is as follows. Receptor which shows binding specificity for the cytokine ifng1 (interferon gamma 1). The sequence is that of Interferon gamma receptor 1-like from Carassius auratus (Goldfish).